Consider the following 134-residue polypeptide: Small ribosomal subunit protein bS6 (134 aa).

A disordered region spans residues Ala103–Val134. The span at Ala118–Val134 shows a compositional bias: low complexity.

Belongs to the bacterial ribosomal protein bS6 family.

Its function is as follows. Binds together with bS18 to 16S ribosomal RNA. This is Small ribosomal subunit protein bS6 from Geobacter sp. (strain M21).